The following is a 985-amino-acid chain: Exocyst complex component 4 (985 aa).

The stretch at 36-70 forms a coiled coil; it reads SETTEERQKEKQKIEAEFKRSDLRLNELVSRHDQQ. Phosphoserine is present on residues Ser235, Ser456, Ser459, Ser682, and Ser686. The segment at 434 to 480 is disordered; the sequence is DKSSHVGTSNNSDAFKEHRRNASDASVDDNLAGQLGGSGKGSTSGLF.

It belongs to the SEC8 family. As to quaternary structure, the exocyst complex is composed of Sec3/Exoc1, Sec5/Exoc2, Sec6/Exoc3, Sec8/Exoc4, Sec10/Exoc5, Sec15/Exoc6, exo70/Exoc7 and Exo84/Exoc8. Abundant in the embryonic and larval glutamatergic neuromuscular junctions (NMJs), pre and postsynaptically.

Functionally, component of the exocyst complex involved in the docking of exocytic vesicles with fusion sites on the plasma membrane. Involved in regulation of synaptic microtubule formation, and also regulation of synaptic growth and glutamate receptor trafficking. Does not appear to be required for basal neurotransmission. This Drosophila melanogaster (Fruit fly) protein is Exocyst complex component 4.